Here is a 133-residue protein sequence, read N- to C-terminus: UPF0768 protein C977.18 (133 aa).

Belongs to the UPF0768 family.

The protein is UPF0768 protein C977.18 of Schizosaccharomyces pombe (strain 972 / ATCC 24843) (Fission yeast).